The sequence spans 46 residues: GPSFCKANGKPCSYHADCCNCCLSGICAPSTNWILPGCSTSSFFKI.

4-hydroxyproline is present on residues Pro2 and Pro11. Intrachain disulfides connect Cys5/Cys19, Cys12/Cys22, Cys18/Cys27, and Cys21/Cys38. Pro29 carries the 4-hydroxyproline modification. Phe44 is subject to D-phenylalanine.

Belongs to the conotoxin I1 superfamily. In terms of tissue distribution, expressed by the venom duct.

The protein resides in the secreted. In terms of biological role, iota-conotoxins bind to voltage-gated sodium channels (Nav) and act as agonists by shifting the voltage-dependence of activation to more hyperpolarized levels. Produces general excitatory symptoms. This Conus radiatus (Rayed cone) protein is Iota-conotoxin-like R11.17.